A 693-amino-acid chain; its full sequence is UvrABC system protein C (693 aa).

The 80-residue stretch at 16-95 folds into the GIY-YIG domain; it reads DAPGVYRFRD…IKEFDPRFNV (80 aa). The UVR domain maps to 208 to 243; it reads GVFLRRLESEMAAASAELDFERAARVRDDINALRRV. Positions 656–693 are disordered; it reads APSPDDATTEPGAVGEPGTADGAAADPDGRDAVVVPEG. A compositionally biased stretch (low complexity) spans 672-693; that stretch reads PGTADGAAADPDGRDAVVVPEG.

This sequence belongs to the UvrC family. As to quaternary structure, interacts with UvrB in an incision complex.

The protein localises to the cytoplasm. Its function is as follows. The UvrABC repair system catalyzes the recognition and processing of DNA lesions. UvrC both incises the 5' and 3' sides of the lesion. The N-terminal half is responsible for the 3' incision and the C-terminal half is responsible for the 5' incision. The sequence is that of UvrABC system protein C from Beutenbergia cavernae (strain ATCC BAA-8 / DSM 12333 / CCUG 43141 / JCM 11478 / NBRC 16432 / NCIMB 13614 / HKI 0122).